Reading from the N-terminus, the 197-residue chain is Holliday junction branch migration complex subunit RuvA (197 aa).

Residues 1-63 (MYAYLKGIIT…EDAHLLYGFR (63 aa)) are domain I. Residues 64–142 (SEDEKKLFLS…VAGDDLPAKV (79 aa)) form a domain II region. The segment at 143–147 (AVQAS) is flexible linker. The domain III stretch occupies residues 148–197 (AENQELEEAMEAMLALGYKATELKKIKKFFEGTTDTAENYIKSALKMLVK).

Belongs to the RuvA family. Homotetramer. Forms an RuvA(8)-RuvB(12)-Holliday junction (HJ) complex. HJ DNA is sandwiched between 2 RuvA tetramers; dsDNA enters through RuvA and exits via RuvB. An RuvB hexamer assembles on each DNA strand where it exits the tetramer. Each RuvB hexamer is contacted by two RuvA subunits (via domain III) on 2 adjacent RuvB subunits; this complex drives branch migration. In the full resolvosome a probable DNA-RuvA(4)-RuvB(12)-RuvC(2) complex forms which resolves the HJ.

The protein resides in the cytoplasm. The RuvA-RuvB-RuvC complex processes Holliday junction (HJ) DNA during genetic recombination and DNA repair, while the RuvA-RuvB complex plays an important role in the rescue of blocked DNA replication forks via replication fork reversal (RFR). RuvA specifically binds to HJ cruciform DNA, conferring on it an open structure. The RuvB hexamer acts as an ATP-dependent pump, pulling dsDNA into and through the RuvAB complex. HJ branch migration allows RuvC to scan DNA until it finds its consensus sequence, where it cleaves and resolves the cruciform DNA. The sequence is that of Holliday junction branch migration complex subunit RuvA from Streptococcus pneumoniae serotype 19F (strain G54).